A 322-amino-acid chain; its full sequence is RNA pseudouridine synthase 1 (322 aa).

The active site involves Asp-120.

This sequence belongs to the pseudouridine synthase RluA family.

It catalyses the reaction a uridine in RNA = a pseudouridine in RNA. The sequence is that of RNA pseudouridine synthase 1 from Arabidopsis thaliana (Mouse-ear cress).